The primary structure comprises 212 residues: MADRSGGSTAGDTVPAPPPVRRRSSANYRAYATEPHAKKKSKISASRKLQLKTLMLQIAKQELEREAEERRGEKGRALSTRCQPLELAGLGFAELQDLCRQLHARVDKVDEERYDVEAKVTKNITEIADLNQKIFDLRGKFKRPTLRRVRISADAMMQALLGARAKETLDLRAHLKQVKKEDTEKENREVGDWRKNIDALSGMEGRKKKFEG.

Positions M1–G11 are enriched in polar residues. A disordered region spans residues M1–A45. The residue at position 2 (A2) is an N-acetylalanine. S5 carries the post-translational modification Phosphoserine. Phosphoserine; by PKA and PKD/PRKD1 occurs at positions 24 and 25. Y28 bears the Phosphotyrosine mark. Residue T33 is modified to Phosphothreonine; by STK4/MST1. Residues E34–R81 are involved in binding TNC. A phosphoserine; by PKC/PRKCE mark is found at S44 and S46. T53 bears the Phosphothreonine; by STK4/MST1 mark. Position 79 is a phosphoserine (S79). T80 carries the phosphothreonine modification. The segment at N131 to I151 is involved in binding TNC and actin. Residue T145 is modified to Phosphothreonine; by STK4/MST1. A Phosphoserine; by PAK3 modification is found at S152. A Phosphothreonine modification is found at T183. At S201 the chain carries Phosphoserine.

It belongs to the troponin I family. Interacts with TRIM63. Binds to actin and tropomyosin. Interacts with STK4/MST1. Post-translationally, phosphorylated at Ser-24 and Ser-25 by PRKD1; phosphorylation reduces myofilament calcium sensitivity. Phosphorylated preferentially at Thr-33. Phosphorylation by STK4/MST1 alters its binding affinity to TNNC1 (cardiac Tn-C) and TNNT2 (cardiac Tn-T). Phosphorylated at Ser-44 and Ser-46 by PRKCE; phosphorylation increases myocardium contractile dysfunction.

In terms of biological role, troponin I is the inhibitory subunit of troponin, the thin filament regulatory complex which confers calcium-sensitivity to striated muscle actomyosin ATPase activity. The protein is Troponin I, cardiac muscle (TNNI3) of Bos taurus (Bovine).